Reading from the N-terminus, the 185-residue chain is Ribosome-recycling factor (185 aa).

Belongs to the RRF family.

It localises to the cytoplasm. Responsible for the release of ribosomes from messenger RNA at the termination of protein biosynthesis. May increase the efficiency of translation by recycling ribosomes from one round of translation to another. The polypeptide is Ribosome-recycling factor (Corynebacterium diphtheriae (strain ATCC 700971 / NCTC 13129 / Biotype gravis)).